Consider the following 72-residue polypeptide: uncharacterized protein (72 aa).

Its subcellular location is the plastid. It is found in the chloroplast. This is an uncharacterized protein from Oenothera berteroana (Bertero's evening primrose).